The chain runs to 161 residues: MSLIRRSNVFDPFSLDLWDPFDGFPFGSGSRSSGSIFPSFPRGTSSETAAFAGARIDWKETPEAHVFKADVPGLKKEEVKVEVEDGNVLQISGERSKEQEEKTDKWHRVERSSGKFLRRFRLPENTKPEQIKASMENGVLTVTVPKEEPKKPDVKSIQVTG.

Residues 47-161 (ETAAFAGARI…PDVKSIQVTG (115 aa)) form the sHSP domain.

It belongs to the small heat shock protein (HSP20) family. In terms of assembly, may form oligomeric structures.

The protein localises to the cytoplasm. This is 18.1 kDa class I heat shock protein (HSP18.1) from Oryza sativa subsp. japonica (Rice).